Here is a 400-residue protein sequence, read N- to C-terminus: Large envelope protein (400 aa).

Met-1 is modified (N-acetylmethionine). The tract at residues Met-1–Asn-20 is disordered. Gly-2 carries N-myristoyl glycine; by host lipidation. The interval Gly-2 to Ala-119 is pre-S1. The interval Gly-2–Asn-174 is pre-S. The Virion surface; in external conformation portion of the chain corresponds to Gly-2–Gly-181. Residues Gly-2 to Arg-253 are Intravirion; in internal conformation-facing. The N-linked (GlcNAc...) asparagine glycan is linked to Trp-4. The tract at residues Met-120–Asn-174 is pre-S2. A helical transmembrane segment spans residues Phe-182–Ile-202. Topologically, residues Pro-203–Arg-253 are intravirion; in external conformation. The chain crosses the membrane as a helical span at residues Phe-254–Tyr-274. Residues Gln-275–Ser-348 are Virion surface-facing. N-linked (GlcNAc...) asparagine; by host glycosylation occurs at Asn-320. Residues Leu-349–Ile-369 traverse the membrane as a helical segment. Residues Trp-370–Trp-375 lie on the Intravirion side of the membrane. The helical transmembrane segment at Gly-376–Val-398 threads the bilayer. The Virion surface segment spans residues Tyr-399–Ile-400.

This sequence belongs to the orthohepadnavirus major surface antigen family. As to quaternary structure, in its internal form (Li-HBsAg), interacts with the capsid protein and with the isoform S. Interacts with host chaperone CANX. In terms of assembly, associates with host chaperone CANX through its pre-S2 N glycan; this association may be essential for isoform M proper secretion. Interacts with isoform L. Interacts with the antigens of satellite virus HDV (HDVAgs); this interaction is required for encapsidation of HDV genomic RNA. Post-translationally, isoform M is N-terminally acetylated by host at a ratio of 90%, and N-glycosylated by host at the pre-S2 region. In terms of processing, myristoylated.

The protein resides in the virion membrane. In terms of biological role, the large envelope protein exists in two topological conformations, one which is termed 'external' or Le-HBsAg and the other 'internal' or Li-HBsAg. In its external conformation the protein attaches the virus to cell receptors and thereby initiating infection. This interaction determines the species specificity and liver tropism. This attachment induces virion internalization predominantly through caveolin-mediated endocytosis. The large envelope protein also assures fusion between virion membrane and endosomal membrane. In its internal conformation the protein plays a role in virion morphogenesis and mediates the contact with the nucleocapsid like a matrix protein. Functionally, the middle envelope protein plays an important role in the budding of the virion. It is involved in the induction of budding in a nucleocapsid independent way. In this process the majority of envelope proteins bud to form subviral lipoprotein particles of 22 nm of diameter that do not contain a nucleocapsid. The polypeptide is Large envelope protein (Hepatitis B virus genotype A1 subtype adw2 (isolate Southern-Africa/Cai) (HBV-A)).